The primary structure comprises 180 residues: uncharacterized protein (180 aa).

Residues Met1–Ala30 form the signal peptide. The interval Gly25 to Tyr46 is disordered. Over residues Glu29–Lys39 the composition is skewed to low complexity.

It is found in the secreted. This is an uncharacterized protein from Bacillus subtilis (strain 168).